The chain runs to 269 residues: Zinc transporter ZupT (269 aa).

8 consecutive transmembrane segments (helical) span residues 11-31 (IALA…LLVL), 40-60 (LLAF…LSEI), 80-100 (YGTL…HFIP), 125-145 (ALLT…ATFF), 158-178 (AFAI…PVYF), 187-207 (FSAS…GYWL), 217-237 (FGWV…DELL), and 249-269 (TVYG…LFKW). The Fe(2+) site is built by Asn136 and Glu139. Zn(2+) contacts are provided by Glu139 and His164. 3 residues coordinate Fe(2+): Asn165, Glu168, and Glu197. Position 168 (Glu168) interacts with Zn(2+).

Belongs to the ZIP transporter (TC 2.A.5) family. ZupT subfamily.

It localises to the cell inner membrane. It catalyses the reaction Zn(2+)(in) = Zn(2+)(out). Its function is as follows. Mediates zinc uptake. May also transport other divalent cations. The protein is Zinc transporter ZupT of Stenotrophomonas maltophilia (strain K279a).